We begin with the raw amino-acid sequence, 138 residues long: Bis(5'-nucleosyl)-tetraphosphatase [asymmetrical] (138 aa).

The 132-residue stretch at 1 to 132 (MVVKAAGLVI…EMGSLLRKFS (132 aa)) folds into the Nudix hydrolase domain. The Nudix box signature appears at 37–58 (GHVDPGEDEWQAAIRETKEEAN).

Belongs to the Nudix hydrolase family. In terms of assembly, monomer. Mg(2+) serves as cofactor. Requires Co(2+) as cofactor. It depends on Mn(2+) as a cofactor. The cofactor is Zn(2+). Ca(2+) is required as a cofactor.

It carries out the reaction P(1),P(4)-bis(5'-adenosyl) tetraphosphate + H2O = AMP + ATP + 2 H(+). Asymmetrically hydrolyzes Ap4A to yield AMP and ATP. In Caenorhabditis elegans, this protein is Bis(5'-nucleosyl)-tetraphosphatase [asymmetrical] (ndx-4).